The primary structure comprises 122 residues: Large ribosomal subunit protein uL18 (122 aa).

The protein belongs to the universal ribosomal protein uL18 family. Part of the 50S ribosomal subunit; part of the 5S rRNA/L5/L18/L25 subcomplex. Contacts the 5S and 23S rRNAs.

In terms of biological role, this is one of the proteins that bind and probably mediate the attachment of the 5S RNA into the large ribosomal subunit, where it forms part of the central protuberance. This is Large ribosomal subunit protein uL18 from Prochlorococcus marinus (strain MIT 9301).